Consider the following 498-residue polypeptide: Polygalacturonan/rhamnogalacturonan-binding protein YtcQ (498 aa).

A signal peptide spans 1 to 22; that stretch reads MGNKWRVLLIVLVLALGGVLAG. A lipid anchor (N-palmitoyl cysteine) is attached at cysteine 23. Residue cysteine 23 is the site of S-diacylglycerol cysteine attachment.

Belongs to the bacterial solute-binding protein 1 family. The complex is probably composed of two ATP-binding proteins (MsmX), two transmembrane proteins (YtcP and YteP) and a solute-binding protein (YtcQ).

The protein localises to the cell membrane. Involved in pectin degradation. Part of the ABC transporter complex YtcQP-YteP involved in the uptake of polygalacturonan and rhamnogalacturonan type I. The chain is Polygalacturonan/rhamnogalacturonan-binding protein YtcQ (ytcQ) from Bacillus subtilis (strain 168).